Consider the following 123-residue polypeptide: Small ribosomal subunit protein uS13 (123 aa).

The disordered stretch occupies residues 94–123; it reads RRGLPVRGQHTKNNARTRKGPARAIAGKKK.

It belongs to the universal ribosomal protein uS13 family. As to quaternary structure, part of the 30S ribosomal subunit. Forms a loose heterodimer with protein S19. Forms two bridges to the 50S subunit in the 70S ribosome.

In terms of biological role, located at the top of the head of the 30S subunit, it contacts several helices of the 16S rRNA. In the 70S ribosome it contacts the 23S rRNA (bridge B1a) and protein L5 of the 50S subunit (bridge B1b), connecting the 2 subunits; these bridges are implicated in subunit movement. Contacts the tRNAs in the A and P-sites. This Oenococcus oeni (strain ATCC BAA-331 / PSU-1) protein is Small ribosomal subunit protein uS13.